The following is a 241-amino-acid chain: ATP synthase subunit a (241 aa).

5 consecutive transmembrane segments (helical) span residues 30–50, 91–111, 128–148, 193–213, and 214–234; these read GQVF…VVIG, FIGT…LVPW, INTT…AGLS, LVVA…VMFL, and GLFT…YYIG.

The protein belongs to the ATPase A chain family. F-type ATPases have 2 components, CF(1) - the catalytic core - and CF(0) - the membrane proton channel. CF(1) has five subunits: alpha(3), beta(3), gamma(1), delta(1), epsilon(1). CF(0) has four main subunits: a, b, b' and c.

The protein resides in the cellular thylakoid membrane. Functionally, key component of the proton channel; it plays a direct role in the translocation of protons across the membrane. This Prochlorococcus marinus (strain NATL1A) protein is ATP synthase subunit a.